The primary structure comprises 315 residues: Atrochrysone carboxyl ACP thioesterase (315 aa).

Zn(2+) is bound by residues His-95, His-97, Asp-99, and His-100. The Proton donor/acceptor role is filled by Asp-99.

It belongs to the metallo-beta-lactamase superfamily. Zn(2+) is required as a cofactor. Endocrocin is specifically produced in conidia.

It catalyses the reaction atrochrysone carboxyl-[ACP] + H2O = atrochrysone carboxylate + holo-[ACP] + H(+). Its function is as follows. Atrochrysone carboxyl ACP thioesterase; part of the gene cluster that mediates the biosynthesis of endocrocin, a simple anthraquinone interesting for many biotechnological applications. The pathway begins with the synthesis of atrochrysone thioester by the polyketide synthase (PKS) encA. The atrochrysone carboxyl ACP thioesterase encB then breaks the thioester bond and releases the atrochrysone carboxylic acid from encA. The atrochrysone carboxylic acid is then converted to endocrocin anthrone which is further oxidized into endocrocin by the anthrone oxygenase encC. The exact function of encD has not been identified yet, but it negatively regulates endocrocin production, likely through the modification of endocrocin itself. The sequence is that of Atrochrysone carboxyl ACP thioesterase from Aspergillus fumigatus (strain ATCC MYA-4609 / CBS 101355 / FGSC A1100 / Af293) (Neosartorya fumigata).